The following is a 303-amino-acid chain: Acetylglutamate kinase (303 aa).

Residues 69–70, Arg-91, and Asn-190 contribute to the substrate site; that span reads GG.

Belongs to the acetylglutamate kinase family. ArgB subfamily.

The protein localises to the cytoplasm. It catalyses the reaction N-acetyl-L-glutamate + ATP = N-acetyl-L-glutamyl 5-phosphate + ADP. It participates in amino-acid biosynthesis; L-arginine biosynthesis; N(2)-acetyl-L-ornithine from L-glutamate: step 2/4. In terms of biological role, catalyzes the ATP-dependent phosphorylation of N-acetyl-L-glutamate. This chain is Acetylglutamate kinase, found in Nocardia farcinica (strain IFM 10152).